A 113-amino-acid chain; its full sequence is ATP-dependent Clp protease adapter protein ClpS (113 aa).

Residues 1-11 (MHRDLHMMSDR) show a composition bias toward basic and acidic residues. Residues 1-25 (MHRDLHMMSDRSEDDGDTSILTATK) form a disordered region.

This sequence belongs to the ClpS family. Binds to the N-terminal domain of the chaperone ClpA.

Involved in the modulation of the specificity of the ClpAP-mediated ATP-dependent protein degradation. This is ATP-dependent Clp protease adapter protein ClpS from Roseobacter denitrificans (strain ATCC 33942 / OCh 114) (Erythrobacter sp. (strain OCh 114)).